The following is a 207-amino-acid chain: Large ribosomal subunit protein uL3 (207 aa).

The interval 113–148 (KGKGFQGPIKRHGQSRGPMAHGSRYHRRPGSMGPVA) is disordered.

The protein belongs to the universal ribosomal protein uL3 family. As to quaternary structure, part of the 50S ribosomal subunit. Forms a cluster with proteins L14 and L19.

One of the primary rRNA binding proteins, it binds directly near the 3'-end of the 23S rRNA, where it nucleates assembly of the 50S subunit. The polypeptide is Large ribosomal subunit protein uL3 (Lactococcus lactis subsp. lactis (strain IL1403) (Streptococcus lactis)).